The primary structure comprises 399 residues: Elongation factor Tu (399 aa).

The region spanning 10–204 is the tr-type G domain; that stretch reads KPHVNIGTIG…AVDTSIPEPE (195 aa). A G1 region spans residues 19–26; it reads GHVDHGKT. Position 19–26 (19–26) interacts with GTP; it reads GHVDHGKT. T26 contacts Mg(2+). The interval 60 to 64 is G2; the sequence is GITIN. The segment at 81-84 is G3; sequence DCPG. GTP is bound by residues 81-85 and 136-139; these read DCPGH and NKCD. Residues 136–139 form a G4 region; that stretch reads NKCD. The G5 stretch occupies residues 174 to 176; that stretch reads SGL.

Belongs to the TRAFAC class translation factor GTPase superfamily. Classic translation factor GTPase family. EF-Tu/EF-1A subfamily. In terms of assembly, monomer.

The protein resides in the cytoplasm. The catalysed reaction is GTP + H2O = GDP + phosphate + H(+). GTP hydrolase that promotes the GTP-dependent binding of aminoacyl-tRNA to the A-site of ribosomes during protein biosynthesis. The protein is Elongation factor Tu of Prochlorococcus marinus (strain MIT 9303).